Here is a 124-residue protein sequence, read N- to C-terminus: UPF0337 protein blr1496 (124 aa).

Belongs to the UPF0337 (CsbD) family.

The sequence is that of UPF0337 protein blr1496 from Bradyrhizobium diazoefficiens (strain JCM 10833 / BCRC 13528 / IAM 13628 / NBRC 14792 / USDA 110).